We begin with the raw amino-acid sequence, 279 residues long: Zinc finger CCCH domain-containing protein 1 (279 aa).

The interval 20-45 is disordered; it reads DVIVLSPGPPARRRPPPVKAVEPESG. 2 C3H1-type zinc fingers span residues 56 to 84 and 139 to 167; these read FYKT…HGDE and RAIT…HVSA.

The sequence is that of Zinc finger CCCH domain-containing protein 1 from Oryza sativa subsp. japonica (Rice).